The sequence spans 97 residues: Peptide Y (97 aa).

A signal peptide spans 1 to 28; it reads MANMLRSWMMLAALAVCLLVCLSSFADA. Tyrosine amide is present on Y64. A propeptide spans 68-97 (C-terminal extension); it reads STPEQAVAWLLFGADSSQDAEPRLDYSDQW.

It belongs to the NPY family.

It localises to the secreted. This is Peptide Y from Dicentrarchus labrax (European seabass).